Reading from the N-terminus, the 323-residue chain is Sphingolipid delta(4)-desaturase DES1 (323 aa).

G2 carries the N-myristoyl glycine lipid modification. A run of 2 helical transmembrane segments spans residues 41–61 (PNLI…FYIV) and 68–88 (WVIF…TLAI). The short motif at 89–93 (HEIAH) is the Histidine box-1 element. A helical membrane pass occupies residues 102 to 122 (AMWNRWFGMFANLPIGIPYSI). A Histidine box-2 motif is present at residues 128–132 (HMDHH). The next 3 membrane-spanning stretches (helical) occupy residues 152 to 172 (FFCT…FYAF), 184 to 204 (YLEV…YYFL), and 209 to 229 (LVYM…SGHF). The Histidine box-3 signature appears at 259–263 (HNEHH). Residue S307 is modified to Phosphoserine.

It belongs to the fatty acid desaturase type 1 family. DEGS subfamily. In terms of assembly, interacts with RLBP1; the interaction increases synthesis of chromophore-precursors by DEGS1. In terms of processing, myristoylation can target the enzyme to the mitochondria leading to an increase in ceramide levels. In terms of tissue distribution, ubiquitous.

It is found in the mitochondrion membrane. The protein resides in the endoplasmic reticulum membrane. The catalysed reaction is an N-acylsphinganine + 2 Fe(II)-[cytochrome b5] + O2 + 2 H(+) = an N-acylsphing-4-enine + 2 Fe(III)-[cytochrome b5] + 2 H2O. It carries out the reaction all-trans-retinol = 11-cis-retinol. The enzyme catalyses all-trans-retinol = 9-cis-retinol. It catalyses the reaction all-trans-retinol = 13-cis-retinol. The catalysed reaction is 11-cis-retinol = 13-cis-retinol. It carries out the reaction 11-cis-retinol = 9-cis-retinol. Functionally, has sphingolipid-delta-4-desaturase activity. Converts D-erythro-sphinganine to D-erythro-sphingosine (E-sphing-4-enine). Catalyzes the equilibrium isomerization of retinols. The protein is Sphingolipid delta(4)-desaturase DES1 of Homo sapiens (Human).